A 334-amino-acid polypeptide reads, in one-letter code: Ferredoxin--NADP reductase (334 aa).

Residues Asp-33, Gln-41, Tyr-46, Ala-86, Phe-120, Asp-286, and Thr-327 each coordinate FAD.

This sequence belongs to the ferredoxin--NADP reductase type 2 family. Homodimer. FAD is required as a cofactor.

It catalyses the reaction 2 reduced [2Fe-2S]-[ferredoxin] + NADP(+) + H(+) = 2 oxidized [2Fe-2S]-[ferredoxin] + NADPH. In Rickettsia akari (strain Hartford), this protein is Ferredoxin--NADP reductase.